The chain runs to 685 residues: Putative mannosyltransferase YycA (685 aa).

6 consecutive transmembrane segments (helical) span residues 6 to 26, 68 to 88, 109 to 129, 154 to 174, 176 to 196, and 204 to 224; these read FDAALILILLAAAFLNTYHIW, VLWIQTIFALIFGVHTWSVII, FGVGAARIAALVMALTPIAVA, AVKQGKLVWLLTAFALIGLAF, MKMMQAFMVLPAFVLFYLIAS, and IGSLLLSLVLLTGLSLSWAIA. The interval 269–347 is disordered; sequence MNAAGGGNMQ…GGGGGKSVNM (79 aa). Residues 277 to 286 are compositionally biased toward polar residues; it reads MQNQDNMQAP. Low complexity predominate over residues 287-303; the sequence is NGNGSSFSQNGNQSFGN. Residues 318–343 show a composition bias toward gly residues; that stretch reads LNGGGGTPPTGGNGPGNGGPGGGGGK. A run of 7 helical transmembrane segments spans residues 363 to 383, 399 to 419, 422 to 442, 455 to 475, 479 to 499, 513 to 533, and 573 to 593; these read LSGQISWMLPFSLIGLLGAII, TLFWAAWLVPVAGFFSIAGFF, YYLIMLAPPIAALSGIGWYTM, YLLPAAVLITAVFQVYILSAY, IGSVWMYVLGLLGLGITLALL, IISLCVLLLTPVYWSATPLLY, and TGEEYLFATLTTVTAAPYIIY. The segment at 652 to 685 is disordered; sequence TSDEYSGSSSSTNSVQGMRRGPGGESQQTLYLVE. The span at 654–665 shows a compositional bias: low complexity; sequence DEYSGSSSSTNS. Over residues 676–685 the composition is skewed to polar residues; sequence ESQQTLYLVE.

The protein belongs to the glycosyltransferase 39 family.

The protein resides in the cell membrane. The polypeptide is Putative mannosyltransferase YycA (yycA) (Bacillus subtilis (strain 168)).